Here is a 191-residue protein sequence, read N- to C-terminus: Small ribosomal subunit protein eS7y (191 aa).

At Met-1 the chain carries N-acetylmethionine. Residues 17-50 are a coiled coil; the sequence is TEFEEQVTQALFDLENTNQELKSELKDLYINQAV.

It belongs to the eukaryotic ribosomal protein eS7 family.

This is Small ribosomal subunit protein eS7y (RPS7B) from Arabidopsis thaliana (Mouse-ear cress).